The primary structure comprises 201 residues: Recombination protein RecR (201 aa).

The segment at 60–75 (CHECGNVDTSDPCTIC) adopts a C4-type zinc-finger fold. Positions 83-178 (SILVVVEDVS…KVTKLAHGVP (96 aa)) constitute a Toprim domain.

The protein belongs to the RecR family.

In terms of biological role, may play a role in DNA repair. It seems to be involved in an RecBC-independent recombinational process of DNA repair. It may act with RecF and RecO. The chain is Recombination protein RecR from Methylobacterium nodulans (strain LMG 21967 / CNCM I-2342 / ORS 2060).